A 354-amino-acid polypeptide reads, in one-letter code: Histidinol-phosphate aminotransferase (354 aa).

Lys-222 is modified (N6-(pyridoxal phosphate)lysine).

This sequence belongs to the class-II pyridoxal-phosphate-dependent aminotransferase family. Histidinol-phosphate aminotransferase subfamily. In terms of assembly, homodimer. Pyridoxal 5'-phosphate serves as cofactor.

The catalysed reaction is L-histidinol phosphate + 2-oxoglutarate = 3-(imidazol-4-yl)-2-oxopropyl phosphate + L-glutamate. Its pathway is amino-acid biosynthesis; L-histidine biosynthesis; L-histidine from 5-phospho-alpha-D-ribose 1-diphosphate: step 7/9. In Leuconostoc citreum (strain KM20), this protein is Histidinol-phosphate aminotransferase.